Consider the following 1392-residue polypeptide: Leucine-rich PPR motif-containing protein, mitochondrial (1392 aa).

The transit peptide at 1-77 (MSALLRPARW…LPEEPAPVRR (77 aa)) directs the protein to the mitochondrion. 14 PPR repeats span residues 125 to 159 (LLRS…GTVY), 160 to 194 (DVSH…NIQP), 195 to 229 (NRVT…DLPI), 230 to 264 (TEAV…GIEP), 265 to 299 (GPDT…DHYF), 300 to 334 (MDRD…RRSI), 402 to 436 (HSSS…GFPI), 437 to 471 (RTHY…GVDP), 677 to 708 (VGDP…ESDM), 709 to 745 (VIGG…SAVL), 746 to 783 (DTAK…IKDA), 784 to 820 (AVLS…AKPS), 821 to 856 (SNIS…VLPR), and 953 to 987 (RDQM…NLIP). Residues lysine 151 and lysine 186 each carry the N6-acetyllysine modification. Lysine 291 bears the N6-acetyllysine mark. N6-acetyllysine is present on lysine 462. At lysine 749 the chain carries N6-acetyllysine. Phosphoserine is present on residues serine 1025, serine 1026, and serine 1028. 6 PPR repeats span residues 1030-1064 (GDTV…DVVF), 1065-1101 (SSEA…GFTL), 1102-1136 (NGAA…EQVP), 1137-1173 (SELA…IELS), 1174-1208 (RMVF…ENQT), and 1315-1349 (NDRV…NMKL). Serine 1137 is modified (phosphoserine).

Component of mRNP complexes associated with HNRPA1. Component of the complex, at least composed of LRPPRC, BECN1 and BCL2; the interactions prevent BECN1 from forming an autophagy-inducing complex with PIK3C3. Interacts with CECR2, HEBP2, MAP1S, UXT, PPARGC1A and FOXO1. Interacts (via N-terminus) with EIF4E; the interaction promotes association of EIF4E with 4ESE-containing mRNAs. Interacts with exportin XPO1/CRM1; interacts both alone and in complex with EIF4E and 4ESE-containing mRNAs to form an EIF4E-dependent mRNA export complex. Interacts with importin IPO8; the interaction occurs when LRPPRC is in its RNA-free form and returns LRPPRC to the nucleus for further export rounds. Interacts with BECN1. As to expression, widely expressed. Expressed in liver, brain and a subset of small diameter sensory neurons in the dorsal root ganglion (at protein level).

Its subcellular location is the mitochondrion. The protein resides in the nucleus. The protein localises to the nucleoplasm. It is found in the nucleus inner membrane. It localises to the nucleus outer membrane. In terms of biological role, may play a role in RNA metabolism in both nuclei and mitochondria. In the nucleus binds to HNRPA1-associated poly(A) mRNAs and is part of nmRNP complexes at late stages of mRNA maturation which are possibly associated with nuclear mRNA export. Positively modulates nuclear export of mRNAs containing the EIF4E sensitivity element (4ESE) by binding simultaneously to both EIF4E and the 4ESE and acting as a platform for assembly for the RNA export complex. Also binds to exportin XPO1/CRM1 to engage the nuclear pore and traffic the bound mRNAs to the cytoplasm. May bind mature mRNA in the nucleus outer membrane. In mitochondria binds to poly(A) mRNA. Plays a role in translation or stability of mitochondrially encoded cytochrome c oxidase (COX) subunits. May be involved in transcription regulation. Cooperates with PPARGC1A to regulate certain mitochondrially encoded genes and gluconeogenic genes and may regulate docking of PPARGC1A to transcription factors. Seems to be involved in the transcription regulation of the multidrug-related genes MDR1 and MVP. Part of a nuclear factor that binds to the invMED1 element of MDR1 and MVP gene promoters. Binds single-stranded DNA. Required for maintaining mitochondrial potential. Suppresses the initiation of basal levels of autophagy and mitophagy by sustaining BCL2 levels. The protein is Leucine-rich PPR motif-containing protein, mitochondrial (Lrpprc) of Rattus norvegicus (Rat).